The primary structure comprises 1517 residues: Dual oxidase 2 (1517 aa).

An N-terminal signal peptide occupies residues 1–25 (MLPTSLKTLVLLGALLTGPLGPAGG). At 26–599 (QDAPSLPREV…YFEGSGAGYG (574 aa)) the chain is on the extracellular side. The interval 30-596 (SLPREVQRYD…VIDYFEGSGA (567 aa)) is peroxidase-like; mediates peroxidase activity. 4 N-linked (GlcNAc...) asparagine glycosylation sites follow: N100, N348, N455, and N537. C124 and C1131 are joined by a disulfide. A helical transmembrane segment spans residues 600-620 (VTLLAVCCFPVVSLIIAWVVA). At 621 to 1010 (RFRNRERKML…KRFVENYRRH (390 aa)) the chain is on the cytoplasmic side. 3 consecutive EF-hand domains span residues 819 to 854 (PQDM…FMKG), 855 to 890 (SPQD…FIEI), and 899 to 934 (QLAE…HDSD). Residues D832, D834, N836, Y838, E843, D868, D870, N872, and E879 each contribute to the Ca(2+) site. The interval 960 to 1214 (RVSFLTRTPG…GSYALIQLPS (255 aa)) is interaction with TXNDC11. The chain crosses the membrane as a helical span at residues 1011–1031 (IVCVTIFSAICAGLFADRAYY). At 1032 to 1046 (YGFASPPTDIEETTY) the chain is on the extracellular side. A helical transmembrane segment spans residues 1047–1067 (VGIILSRGTAASISFMFSYIL). Residues 1053–1235 (RGTAASISFM…YVGDKLVSLS (183 aa)) form the Ferric oxidoreductase domain. At 1068-1100 (LTMCRNLITFLRETFLNRYIPFDAAVDFHRWIA) the chain is on the cytoplasmic side. Residues 1101–1121 (MAAVVLAVVHSLGHAVNVYIF) traverse the membrane as a helical segment. The Extracellular segment spans residues 1122–1154 (SVSPLSLMTCVFPSVFVNDGSKLPPKYYWWFFE). The chain crosses the membrane as a helical span at residues 1155-1175 (TVPGMTGVLLLLVLAIMYVFA). The Cytoplasmic segment spans residues 1176 to 1185 (SHHFRRHSFR). A helical transmembrane segment spans residues 1186 to 1206 (GFWLTHHLYVVLYALIIIHGS). A topological domain (extracellular) is located at residue Y1207. The helical transmembrane segment at 1208 to 1228 (ALIQLPSFHIYFLVPAIIYVG) threads the bilayer. Residues 1229–1517 (DKLVSLSRKK…AHFVHHYENF (289 aa)) are Cytoplasmic-facing. Residues 1236-1342 (RKKVEISVVK…DGPFGEGHQE (107 aa)) enclose the FAD-binding FR-type domain.

This sequence in the N-terminal section; belongs to the peroxidase family. As to quaternary structure, heterodimer with DUOXA2; disulfide-linked. Interacts with TXNDC11, TPO and CYBA. Post-translationally, N-glycosylated. As to expression, expressed in colon, duodenum, rectum and thyroid.

It is found in the apical cell membrane. It localises to the cell junction. The catalysed reaction is NADH + O2 + H(+) = H2O2 + NAD(+). It catalyses the reaction NADPH + O2 + H(+) = H2O2 + NADP(+). It participates in hormone biosynthesis; thyroid hormone biosynthesis. Its activity is regulated as follows. The NADPH oxidase activity is calcium-dependent. Peroxidase activity is inhibited by aminobenzohydrazide. Generates hydrogen peroxide which is required for the activity of thyroid peroxidase/TPO and lactoperoxidase/LPO. Plays a role in thyroid hormones synthesis and lactoperoxidase-mediated antimicrobial defense at the surface of mucosa. May have its own peroxidase activity through its N-terminal peroxidase-like domain. The sequence is that of Dual oxidase 2 (Duox2) from Rattus norvegicus (Rat).